The chain runs to 196 residues: MARSFYSHIKEAWRSPKEGKLAELQWQRKQEWRDEGAIERIERPTRLDKARELGYKAKQGVVVARVSVRKGGSRKQRHKAGRRSKRQGVNRLSRRKSIQRISEERASRKYRNLRVLNSYWVGEDGSQKWHEVILVDPNHPAIENDGDLGWIASDDHKGRAFRGLTSAGTKGRGQRTRGTGTEKTRPSVTGNDRQGK.

The segment covering 69–98 has biased composition (basic residues); sequence RKGGSRKQRHKAGRRSKRQGVNRLSRRKSI. Disordered regions lie at residues 69-100 and 161-196; these read RKGG…SIQR and FRGL…RQGK. The span at 186–196 shows a compositional bias: polar residues; the sequence is PSVTGNDRQGK.

Belongs to the eukaryotic ribosomal protein eL15 family.

This Halorubrum lacusprofundi (strain ATCC 49239 / DSM 5036 / JCM 8891 / ACAM 34) protein is Large ribosomal subunit protein eL15.